A 238-amino-acid polypeptide reads, in one-letter code: MSIFIQLNNISVNFNNRSILSNISLALTPNCILTLIGPNGAGKSTLVRVILGLLKPNQGKIFFKNNLRIGYIPQKLNLHSTLPITVNRFMNLSYFNDKNYIQGMLSRINIIHLKHHPLQKLSGGEMQKVLLARALLKKPELLVLDEPTQGIDIIGKIAFYKLVNQIKNELKCSILMVSHDLSIVMANTDKVICLNNHICCSGPPETISKNSEFIAIFGNIGKNYLALYRHRHNHHHDF.

The region spanning 5-220 (IQLNNISVNF…SEFIAIFGNI (216 aa)) is the ABC transporter domain. 37–44 (GPNGAGKS) provides a ligand contact to ATP.

The protein belongs to the ABC transporter superfamily. Zinc importer (TC 3.A.1.15.5) family. The complex is composed of two ATP-binding proteins (ZnuC), two transmembrane proteins (ZnuB) and a solute-binding protein (ZnuA).

Its subcellular location is the cell membrane. It catalyses the reaction Zn(2+)(out) + ATP(in) + H2O(in) = Zn(2+)(in) + ADP(in) + phosphate(in) + H(+)(in). Its function is as follows. Part of the ABC transporter complex ZnuABC involved in zinc import. Responsible for energy coupling to the transport system. The chain is Zinc import ATP-binding protein ZnuC from Buchnera aphidicola subsp. Baizongia pistaciae (strain Bp).